The primary structure comprises 337 residues: Thymidylate synthase (337 aa).

DUMP contacts are provided by residues arginine 74 and arginine 199–arginine 200. Cysteine 219 acts as the Nucleophile in catalysis. Residues arginine 239–aspartate 242, asparagine 250, and histidine 280–tyrosine 282 each bind dUMP. Aspartate 242 contributes to the (6R)-5,10-methylene-5,6,7,8-tetrahydrofolate binding site. Alanine 336 provides a ligand contact to (6R)-5,10-methylene-5,6,7,8-tetrahydrofolate.

This sequence belongs to the thymidylate synthase family. As to quaternary structure, homodimer.

The enzyme catalyses dUMP + (6R)-5,10-methylene-5,6,7,8-tetrahydrofolate = 7,8-dihydrofolate + dTMP. It participates in pyrimidine metabolism; dTTP biosynthesis. In Homo sapiens (Human), this protein is Thymidylate synthase (70).